A 473-amino-acid polypeptide reads, in one-letter code: Photosystem II CP43 reaction center protein (473 aa).

Positions 1 to 14 (MKTLYSLRRFYHVE) are excised as a propeptide. Threonine 15 bears the N-acetylthreonine mark. The residue at position 15 (threonine 15) is a Phosphothreonine. 5 consecutive transmembrane segments (helical) span residues 69-93 (LFEV…PHLA), 134-155 (LLGP…KDRN), 178-200 (KALY…RKIT), 255-275 (KPFA…LSYS), and 291-312 (CFNN…ASQA). Glutamate 367 serves as a coordination point for [CaMn4O5] cluster. A helical transmembrane segment spans residues 447 to 471 (RARAAAAGFEKGIDRDFEPVLSMTP).

The protein belongs to the PsbB/PsbC family. PsbC subfamily. As to quaternary structure, PSII is composed of 1 copy each of membrane proteins PsbA, PsbB, PsbC, PsbD, PsbE, PsbF, PsbH, PsbI, PsbJ, PsbK, PsbL, PsbM, PsbT, PsbX, PsbY, PsbZ, Psb30/Ycf12, at least 3 peripheral proteins of the oxygen-evolving complex and a large number of cofactors. It forms dimeric complexes. It depends on Binds multiple chlorophylls and provides some of the ligands for the Ca-4Mn-5O cluster of the oxygen-evolving complex. It may also provide a ligand for a Cl- that is required for oxygen evolution. PSII binds additional chlorophylls, carotenoids and specific lipids. as a cofactor.

It localises to the plastid. It is found in the chloroplast thylakoid membrane. Functionally, one of the components of the core complex of photosystem II (PSII). It binds chlorophyll and helps catalyze the primary light-induced photochemical processes of PSII. PSII is a light-driven water:plastoquinone oxidoreductase, using light energy to abstract electrons from H(2)O, generating O(2) and a proton gradient subsequently used for ATP formation. This is Photosystem II CP43 reaction center protein from Jasminum nudiflorum (Winter jasmine).